Here is a 494-residue protein sequence, read N- to C-terminus: Fumigaclavine B O-acetyltransferase easN (494 aa).

This sequence belongs to the fumigaclavine B O-acetyltransferase family. Monomer.

It catalyses the reaction fumigaclavine B + acetyl-CoA = fumigaclavine A + CoA. The protein operates within alkaloid biosynthesis; ergot alkaloid biosynthesis. Its function is as follows. Fumigaclavine B O-acetyltransferase; part of the gene cluster that mediates the biosynthesis of fumiclavanine C, a fungal ergot alkaloid. DmaW catalyzes the first step of ergot alkaloid biosynthesis by condensing dimethylallyl diphosphate (DMAP) and tryptophan to form 4-dimethylallyl-L-tryptophan. The second step is catalyzed by the methyltransferase easF that methylates 4-dimethylallyl-L-tryptophan in the presence of S-adenosyl-L-methionine, resulting in the formation of 4-dimethylallyl-L-abrine. The catalase easC and the FAD-dependent oxidoreductase easE then transform 4-dimethylallyl-L-abrine to chanoclavine-I which is further oxidized by EasD in the presence of NAD(+), resulting in the formation of chanoclavine-I aldehyde. EasA reduces chanoclavine-I aldehyde to dihydrochanoclavine-I aldehyde that spontaneously dehydrates to form 6,8-dimethyl-6,7-didehydroergoline. EasG then catalyzes the reduction of 6,8-dimethyl-6,7-didehydroergoline to form festuclavine. Hydrolysis of festuclavine by easM then leads to the formation of fumigaclavine B which is in turn acetylated by easN to fumigaclavine A. Finally, easL catalyzes the conversion of fumigaclavine A into fumigaclavine C by attaching a dimethylallyl moiety to C-2 of the indole nucleus. The sequence is that of Fumigaclavine B O-acetyltransferase easN from Aspergillus fumigatus (strain ATCC MYA-4609 / CBS 101355 / FGSC A1100 / Af293) (Neosartorya fumigata).